Here is a 199-residue protein sequence, read N- to C-terminus: Peptidyl-tRNA hydrolase (199 aa).

Tyr-18 contributes to the tRNA binding site. The Proton acceptor role is filled by His-23. TRNA is bound by residues Tyr-72, Asn-74, and Asn-120.

It belongs to the PTH family. Monomer.

The protein localises to the cytoplasm. The catalysed reaction is an N-acyl-L-alpha-aminoacyl-tRNA + H2O = an N-acyl-L-amino acid + a tRNA + H(+). Its function is as follows. Hydrolyzes ribosome-free peptidyl-tRNAs (with 1 or more amino acids incorporated), which drop off the ribosome during protein synthesis, or as a result of ribosome stalling. In terms of biological role, catalyzes the release of premature peptidyl moieties from peptidyl-tRNA molecules trapped in stalled 50S ribosomal subunits, and thus maintains levels of free tRNAs and 50S ribosomes. The chain is Peptidyl-tRNA hydrolase from Bifidobacterium longum (strain DJO10A).